Consider the following 402-residue polypeptide: Phytoene synthase 2, chloroplastic (402 aa).

Residues 1 to 54 constitute a chloroplast transit peptide; sequence MAAGSSAVWAAQHPACSGGKFHHLSPSHSHCRPRRALQTPPALPARRSGASPPR. The segment covering 20–35 has biased composition (basic residues); that stretch reads KFHHLSPSHSHCRPRR. Residues 20–54 form a disordered region; the sequence is KFHHLSPSHSHCRPRRALQTPPALPARRSGASPPR. Over residues 44 to 54 the composition is skewed to low complexity; that stretch reads PARRSGASPPR.

It belongs to the phytoene/squalene synthase family. In terms of tissue distribution, expressed in leaves and endosperm.

It is found in the plastid. It localises to the chloroplast. The protein resides in the plastoglobule. It carries out the reaction 2 (2E,6E,10E)-geranylgeranyl diphosphate = 15-cis-phytoene + 2 diphosphate. Catalyzes the conversion of geranylgeranyl diphosphate to phytoene. Mediates the first committed step in carotenoid biosynthesis. The polypeptide is Phytoene synthase 2, chloroplastic (Zea mays (Maize)).